A 294-amino-acid chain; its full sequence is Bifunctional protein FolD (294 aa).

NADP(+) contacts are provided by residues 166–168 (GRS), S191, and I232.

Belongs to the tetrahydrofolate dehydrogenase/cyclohydrolase family. In terms of assembly, homodimer.

It carries out the reaction (6R)-5,10-methylene-5,6,7,8-tetrahydrofolate + NADP(+) = (6R)-5,10-methenyltetrahydrofolate + NADPH. The enzyme catalyses (6R)-5,10-methenyltetrahydrofolate + H2O = (6R)-10-formyltetrahydrofolate + H(+). It functions in the pathway one-carbon metabolism; tetrahydrofolate interconversion. Its function is as follows. Catalyzes the oxidation of 5,10-methylenetetrahydrofolate to 5,10-methenyltetrahydrofolate and then the hydrolysis of 5,10-methenyltetrahydrofolate to 10-formyltetrahydrofolate. The protein is Bifunctional protein FolD of Bradyrhizobium sp. (strain ORS 278).